The sequence spans 154 residues: Probable transcription factor At4g00232 (154 aa).

Residues 1-44 (MDKANTNRSKVCGGSGEAKLTGKKRKNVSAKQSKKDAKKENSQM) form a disordered region.

The protein belongs to the GeBP family.

This Arabidopsis thaliana (Mouse-ear cress) protein is Probable transcription factor At4g00232.